The chain runs to 338 residues: DNA-directed RNA polymerase subunit alpha (338 aa).

The alpha N-terminal domain (alpha-NTD) stretch occupies residues 1–233 (MYKNWRELIK…EQLQIFINFD (233 aa)). The alpha C-terminal domain (alpha-CTD) stretch occupies residues 250 to 338 (INENLYRSVE…KMIQEGKEDL (89 aa)).

The protein belongs to the RNA polymerase alpha chain family. In terms of assembly, homodimer. The RNAP catalytic core consists of 2 alpha, 1 beta, 1 beta' and 1 omega subunit. When a sigma factor is associated with the core the holoenzyme is formed, which can initiate transcription.

It carries out the reaction RNA(n) + a ribonucleoside 5'-triphosphate = RNA(n+1) + diphosphate. Functionally, DNA-dependent RNA polymerase catalyzes the transcription of DNA into RNA using the four ribonucleoside triphosphates as substrates. This Syntrophotalea carbinolica (strain DSM 2380 / NBRC 103641 / GraBd1) (Pelobacter carbinolicus) protein is DNA-directed RNA polymerase subunit alpha.